A 143-amino-acid chain; its full sequence is Large ribosomal subunit protein uL11 (143 aa).

Belongs to the universal ribosomal protein uL11 family. As to quaternary structure, part of the ribosomal stalk of the 50S ribosomal subunit. Interacts with L10 and the large rRNA to form the base of the stalk. L10 forms an elongated spine to which L12 dimers bind in a sequential fashion forming a multimeric L10(L12)X complex. In terms of processing, one or more lysine residues are methylated.

Its function is as follows. Forms part of the ribosomal stalk which helps the ribosome interact with GTP-bound translation factors. This Dechloromonas aromatica (strain RCB) protein is Large ribosomal subunit protein uL11.